The chain runs to 371 residues: uncharacterized protein (371 aa).

This is an uncharacterized protein from Rickettsia prowazekii (strain Madrid E).